The primary structure comprises 650 residues: Chaperone protein DnaK (650 aa).

At T200 the chain carries Phosphothreonine; by autocatalysis. Positions Q613 to Q634 are enriched in low complexity. Residues Q613–D637 are disordered.

This sequence belongs to the heat shock protein 70 family.

Its function is as follows. Acts as a chaperone. The sequence is that of Chaperone protein DnaK from Burkholderia thailandensis (strain ATCC 700388 / DSM 13276 / CCUG 48851 / CIP 106301 / E264).